The chain runs to 215 residues: MKTVLLTGFDPFGGESINPAWEVAKSLHEKTIGEYKIISKQVPTVFHKSISVLKEYIEELAPEFIICIGQAGGRPDITIERVAINIDDARIADNEGNQPVDVPVVEEGPAAYWSTLPMKAIVKRLQAEGIPASVSQTAGTFVCNHLFYGLMHELEKQNHKVKGGFVHIPFLPEQASNYPGQPSMSLSTIRKGIELAVEVTTTVEVDIVEVGGTTH.

Active-site residues include glutamate 80, cysteine 143, and histidine 167.

The protein belongs to the peptidase C15 family. In terms of assembly, homotetramer.

The protein resides in the cytoplasm. It carries out the reaction Release of an N-terminal pyroglutamyl group from a polypeptide, the second amino acid generally not being Pro.. Removes 5-oxoproline from various penultimate amino acid residues except L-proline. This Bacillus cereus (strain Q1) protein is Pyrrolidone-carboxylate peptidase.